The sequence spans 273 residues: NADH-ubiquinone oxidoreductase 29.9 kDa subunit, mitochondrial (273 aa).

A mitochondrion-targeting transit peptide spans 1–8; sequence MRAALRLL.

It belongs to the complex I NDUFA5 subunit family. As to quaternary structure, complex I is composed of about 40 different subunits.

It localises to the mitochondrion inner membrane. Functionally, accessory subunit of the mitochondrial membrane respiratory chain NADH dehydrogenase (Complex I), that is believed not to be involved in catalysis. Complex I functions in the transfer of electrons from NADH to the respiratory chain. The immediate electron acceptor for the enzyme is believed to be ubiquinone. The polypeptide is NADH-ubiquinone oxidoreductase 29.9 kDa subunit, mitochondrial (nuo-32) (Neurospora crassa (strain ATCC 24698 / 74-OR23-1A / CBS 708.71 / DSM 1257 / FGSC 987)).